The sequence spans 272 residues: Putative phosphoenolpyruvate synthase regulatory protein (272 aa).

An ADP-binding site is contributed by 152–159 (GVSRCGKT).

Belongs to the pyruvate, phosphate/water dikinase regulatory protein family. PSRP subfamily.

The enzyme catalyses [pyruvate, water dikinase] + ADP = [pyruvate, water dikinase]-phosphate + AMP + H(+). It carries out the reaction [pyruvate, water dikinase]-phosphate + phosphate + H(+) = [pyruvate, water dikinase] + diphosphate. Bifunctional serine/threonine kinase and phosphorylase involved in the regulation of the phosphoenolpyruvate synthase (PEPS) by catalyzing its phosphorylation/dephosphorylation. The polypeptide is Putative phosphoenolpyruvate synthase regulatory protein (Pseudomonas savastanoi pv. phaseolicola (strain 1448A / Race 6) (Pseudomonas syringae pv. phaseolicola (strain 1448A / Race 6))).